A 389-amino-acid chain; its full sequence is Serpin B13 (389 aa).

This sequence belongs to the serpin family. Ov-serpin subfamily.

The protein localises to the cytoplasm. May play a role in the proliferation or differentiation of keratinocytes. The chain is Serpin B13 (Serpinb13) from Mus musculus (Mouse).